The sequence spans 430 residues: MDRISLLPDDVVFKILSFVPTKVVVSTNLLSKRWRYLWKHVPKLDYRDPSLVDTEHWRASRFVDKFLLLHEAPVLETLHLSLSRNCPPSDIETWISVAISRRVRNLHIYRYIPSTGPIRLPRSLYTCETLVSLYLLLDFTVDDAPFMFCFRSLKVLVLLFAKFSSDEIVNRLLSGCPVLEGLILIRRNDNVKNFTIAAPSLQRLIAIDCRSQVPGDDVGFVIKAPSLKSLTLLNFSPHSGFRSLVKMPDLVKASIKVRHGDSKMFMGCLTSTKRLALCLQPPLDSCPIGVFNQLVSLSLCTCSLGWCRLILNHTPKLRVLRFEQRQAKFYQLLDPLKRCCSSSVDVQTQWEQPSSVPKCLISSLETVEWIDYKGREVEKKVVMYLLENSRQLKTMAIRSLKSTNDNEKLKMLQELSSIHRICTKCGLSFT.

The region spanning 1–49 (MDRISLLPDDVVFKILSFVPTKVVVSTNLLSKRWRYLWKHVPKLDYRDP) is the F-box domain. An FBD domain is found at 349 to 399 (QWEQPSSVPKCLISSLETVEWIDYKGREVEKKVVMYLLENSRQLKTMAIRS).

This is Putative FBD-associated F-box protein At5g56440 from Arabidopsis thaliana (Mouse-ear cress).